Here is a 205-residue protein sequence, read N- to C-terminus: Regulatory protein RecX (205 aa).

The protein belongs to the RecX family.

It is found in the cytoplasm. Its function is as follows. Modulates RecA activity. In Finegoldia magna (strain ATCC 29328 / DSM 20472 / WAL 2508) (Peptostreptococcus magnus), this protein is Regulatory protein RecX.